A 97-amino-acid chain; its full sequence is UPF0235 protein LHK_03181 (97 aa).

It belongs to the UPF0235 family.

This Laribacter hongkongensis (strain HLHK9) protein is UPF0235 protein LHK_03181.